The primary structure comprises 423 residues: Glutamyl-tRNA reductase (423 aa).

Residues 49-52, Ser107, 112-114, and Gln118 each bind substrate; these read TCNR and EPQ. Cys50 functions as the Nucleophile in the catalytic mechanism. An NADP(+)-binding site is contributed by 187–192; the sequence is GAGETI.

Belongs to the glutamyl-tRNA reductase family. Homodimer.

It carries out the reaction (S)-4-amino-5-oxopentanoate + tRNA(Glu) + NADP(+) = L-glutamyl-tRNA(Glu) + NADPH + H(+). The protein operates within porphyrin-containing compound metabolism; protoporphyrin-IX biosynthesis; 5-aminolevulinate from L-glutamyl-tRNA(Glu): step 1/2. In terms of biological role, catalyzes the NADPH-dependent reduction of glutamyl-tRNA(Glu) to glutamate 1-semialdehyde (GSA). The polypeptide is Glutamyl-tRNA reductase (Pseudoalteromonas atlantica (strain T6c / ATCC BAA-1087)).